A 212-amino-acid polypeptide reads, in one-letter code: Pyrrolidone-carboxylate peptidase (212 aa).

Residues glutamate 80, cysteine 143, and histidine 165 contribute to the active site.

This sequence belongs to the peptidase C15 family. In terms of assembly, homotetramer.

Its subcellular location is the cytoplasm. The enzyme catalyses Release of an N-terminal pyroglutamyl group from a polypeptide, the second amino acid generally not being Pro.. Functionally, removes 5-oxoproline from various penultimate amino acid residues except L-proline. The chain is Pyrrolidone-carboxylate peptidase from Vibrio parahaemolyticus serotype O3:K6 (strain RIMD 2210633).